We begin with the raw amino-acid sequence, 433 residues long: Glutamate-1-semialdehyde 2,1-aminomutase (433 aa).

At K271 the chain carries N6-(pyridoxal phosphate)lysine.

It belongs to the class-III pyridoxal-phosphate-dependent aminotransferase family. HemL subfamily. In terms of assembly, homodimer. Requires pyridoxal 5'-phosphate as cofactor.

Its subcellular location is the cytoplasm. The enzyme catalyses (S)-4-amino-5-oxopentanoate = 5-aminolevulinate. It participates in porphyrin-containing compound metabolism; protoporphyrin-IX biosynthesis; 5-aminolevulinate from L-glutamyl-tRNA(Glu): step 2/2. The protein operates within porphyrin-containing compound metabolism; chlorophyll biosynthesis. The sequence is that of Glutamate-1-semialdehyde 2,1-aminomutase from Prochlorococcus marinus (strain SARG / CCMP1375 / SS120).